Consider the following 242-residue polypeptide: Probable transcriptional regulatory protein NGK_1508 (242 aa).

It belongs to the TACO1 family.

It localises to the cytoplasm. This chain is Probable transcriptional regulatory protein NGK_1508, found in Neisseria gonorrhoeae (strain NCCP11945).